A 619-amino-acid chain; its full sequence is Probable ATP-dependent RNA helicase DDX59 (619 aa).

The tract at residues 1 to 101 (MFVPRSLKIK…KSFSKTQRWP (101 aa)) is disordered. The segment covering 12–27 (SSNDDLKSGEAKKSKP) has biased composition (basic and acidic residues). Lysine 26 is covalently cross-linked (Glycyl lysine isopeptide (Lys-Gly) (interchain with G-Cter in SUMO2)). The segment covering 59–76 (ASSTNSPSCQLAEVSSTG) has biased composition (polar residues). Residue serine 64 is modified to Phosphoserine. Residues 79–91 (EGVKDSHPSEEPV) show a composition bias toward basic and acidic residues. Residues 104–133 (GEPVCVVCGRYGEYICDKTDEDVCSLECKA) form an HIT-type zinc finger. A Phosphoserine modification is found at serine 160. A Q motif motif is present at residues 203-231 (IDFEHCGFPETLNQNLKKSGYEVPTPIQM). In terms of domain architecture, Helicase ATP-binding spans 234 to 405 (IPVGLLGRDI…DQLLHNPVRI (172 aa)). 247-254 (ADTGSGKT) provides a ligand contact to ATP. Residues 353-356 (DEAD) carry the DEAD box motif. Residues 416 to 579 (SVRQIILWVE…ILPPQLLNSP (164 aa)) enclose the Helicase C-terminal domain. Residues 583–594 (EQKRKEQQKDRQ) are compositionally biased toward basic and acidic residues. The disordered stretch occupies residues 583-603 (EQKRKEQQKDRQTQNSLVTGA).

Belongs to the DEAD box helicase family. DDX59 subfamily. As to quaternary structure, interacts (via HIT-type zinc finger) with the RUVBL1/RUVBL2 complex in the presence of ADP.

The protein localises to the cytoplasm. Its subcellular location is the nucleus. The catalysed reaction is ATP + H2O = ADP + phosphate + H(+). The chain is Probable ATP-dependent RNA helicase DDX59 (Ddx59) from Mus musculus (Mouse).